We begin with the raw amino-acid sequence, 549 residues long: Protein X92 (549 aa).

The polypeptide is Protein X92 (Trypanosoma brucei brucei).